Reading from the N-terminus, the 1022-residue chain is MVTYSMIPQISQAPGLIQRVLTFLETLKAQGFTGDTATSYADRLSLSTDNSIYQLLPDAVLFPRSTADVALIARLAGEAAFSSLVFTPRGGGTGTNGQSLNQGIIVDMSRHMNRILEINTEQRWVRVEAGVVKDQLNAYLKPFGFFFSPELSTSNRATLGGMINTDASGQGSLVYGKTSDHVLGLRAVLLGGDILDTRPVPTALAENLAQTPTPEGRIYQQVLTRCREHRELILEKFPKLNRFLTGYDLRHVFSDDMQTFDLTRLLCGAEGTLAFISEARLDITPLPKVRRVVNIKYDAFDSALRNAPLMVEAQALSVETVDSKVLNLAREDIVWHSVRELITAIPDKEMLGLNIVEFAGDDAGQIDRQITQLCARLDTLMTQQQGGVIGYQLCDDLDGIERIYNMRKKAVGLLGNAKGRAKPIPFVEDTAVPPEHLADYIVEFRALLDSHGLSYGMFGHVDAGVLHVRPALDMCDPHQEMMMKQISDEVVALTARYGGLLWGEHGKGFRAQYSPAFFGETLFNELRRIKAAFDPHNRLNPGKICTPFDSEAAMMQVDATKRGSYDRQIPLQVRETWRGALECNGNGLCFNFDARSPMCPSMKITRNRIHSPKGRATLTREWLRLLAEQGADPVMLEKKLPESSLSLRALISRMRNTWYANKGEYDFSHEVKEAMSGCLACKACSTQCPIKIDVPAFRSRFLQLYHTRYLRPLSDHLVAGVESYAPLMAKAPGVFNFFLKQPWATSFSKTHIGMVDLPLLSSPTLKQQLSGHPAMNMTLEQLEALSETQRAQKVLVVQDPFTSFYEAKLVHDFIRLIEKLGYQPVLLPFSPNGKAQHVKGFLQRFARTASKTADFLNRVAKLGMPMVGIDPATVLCYRDEYHQMLGEARGDFNVLLVHEWLHQALQEREVQVTSGEAWYLFAHCTEVTALPGTPGQWQAIFSRFGAKLENINVGCCGMAGTYGHESQNLENSLGIYALSWHPQLQKLPRQRCLATGFSCRSQVKRVEGNGMRHPLQALLELI.

The 234-residue stretch at 53–286 (YQLLPDAVLF…SEARLDITPL (234 aa)) folds into the FAD-binding PCMH-type domain. Positions 407 and 505 each coordinate (R)-2-hydroxyglutarate. The 4Fe-4S ferredoxin-type domain occupies 667-700 (FSHEVKEAMSGCLACKACSTQCPIKIDVPAFRSR). [4Fe-4S] cluster is bound by residues Cys678, Cys681, Cys684, and Cys688.

In the N-terminal section; belongs to the FAD-binding oxidoreductase/transferase type 4 family. Homotetramer. [4Fe-4S] cluster is required as a cofactor. It depends on FAD as a cofactor.

It catalyses the reaction (R)-2-hydroxyglutarate + A = 2-oxoglutarate + AH2. Activity is completely inhibited by the addition of 0.5 mM Mn(2+), Ni(2+), or Co(2+) and partially inhibited by 0.5 mM Zn(2+). Functionally, catalyzes the oxidation of D-2-hydroxyglutarate (D-2-HGA) to 2-oxoglutarate. Appears to be the only D2HGDH in P.ananatis, providing the way to recycle D-2-HGA produced during L-serine synthesis by SerA, by converting it back to 2-oxoglutarate. Is involved in the utilization of D-2-HGA, that can support the growth of P.ananatis as a sole carbon source, although it barely serves as a good substrate. The physiological molecule that functions as the primary electron acceptor during D-2-HGA oxidation by YdiJ in P.ananatis is unknown. Shows strict substrate specificity towards D-2-HGA, since it has no detectable activity on L-2-hydroxyglutarate, L-malate, D-malate, L-lactate, D-lactate, L-tartrate, D-tartrate, L-glycerate, D-glycerate, glutarate, or pyruvate. This is D-2-hydroxyglutarate dehydrogenase from Pantoea ananatis (strain AJ13355).